The chain runs to 180 residues: Dephospho-CoA kinase (180 aa).

The 179-residue stretch at 2 to 180 folds into the DPCK domain; it reads VIGVTGKIGT…VMKLVWEKRE (179 aa). Position 10 to 15 (10 to 15) interacts with ATP; the sequence is GTGKST.

Belongs to the CoaE family.

The protein localises to the cytoplasm. It carries out the reaction 3'-dephospho-CoA + ATP = ADP + CoA + H(+). It participates in cofactor biosynthesis; coenzyme A biosynthesis; CoA from (R)-pantothenate: step 5/5. In terms of biological role, catalyzes the phosphorylation of the 3'-hydroxyl group of dephosphocoenzyme A to form coenzyme A. In Thermotoga maritima (strain ATCC 43589 / DSM 3109 / JCM 10099 / NBRC 100826 / MSB8), this protein is Dephospho-CoA kinase.